A 476-amino-acid polypeptide reads, in one-letter code: Cysteine--tRNA ligase (476 aa).

Cys-31 serves as a coordination point for Zn(2+). The 'HIGH' region signature appears at 33–43 (PTVYNYAHIGN). Residues Cys-211, His-236, and Glu-240 each coordinate Zn(2+). The 'KMSKS' region signature appears at 269-273 (KMSKS). Lys-272 is an ATP binding site.

It belongs to the class-I aminoacyl-tRNA synthetase family. Monomer. It depends on Zn(2+) as a cofactor.

The protein localises to the cytoplasm. The enzyme catalyses tRNA(Cys) + L-cysteine + ATP = L-cysteinyl-tRNA(Cys) + AMP + diphosphate. This Xanthomonas euvesicatoria pv. vesicatoria (strain 85-10) (Xanthomonas campestris pv. vesicatoria) protein is Cysteine--tRNA ligase.